Consider the following 428-residue polypeptide: Beta-1,3-galactosyl-O-glycosyl-glycoprotein beta-1,6-N-acetylglucosaminyltransferase (428 aa).

Residues 1–9 are Cytoplasmic-facing; sequence MLRNLFRRR. A mediates interaction with GOLPH3 and is necessary and sufficient for localization to the Golgi region spans residues 5–9; it reads LFRRR. The helical; Signal-anchor for type II membrane protein transmembrane segment at 10 to 32 threads the bilayer; sequence LFSCPTKYYFMLLVLSLITFSVL. Residues 33-121 are stem region; that stretch reads RIHQKPEFFS…EPLTKEEVGF (89 aa). Over 33–428 the chain is Lumenal; sequence RIHQKPEFFS…RHKALENLEH (396 aa). Asn58 and Asn95 each carry an N-linked (GlcNAc...) asparagine glycan. Cystine bridges form between Cys59/Cys413, Cys100/Cys172, Cys151/Cys199, and Cys372/Cys381. The segment at 122–428 is catalytic; it reads PIAYSIVVHH…RHKALENLEH (307 aa). UDP-N-acetyl-alpha-D-glucosamine-binding positions include 128 to 130, 155 to 157, and Tyr187; these read VVH and DRK. Positions 243, 250, 251, 254, 320, 341, and 358 each coordinate a glycoprotein. The active-site Nucleophile is Glu320. Arg378 and Lys401 together coordinate UDP-N-acetyl-alpha-D-glucosamine.

Belongs to the glycosyltransferase 14 family. Interacts with GOLPH3; may control GCNT1 retention in the Golgi. Post-translationally, N-glycosylated. As to expression, expressed in kidney, liver, stomach, spleen, lung and brain.

The protein localises to the golgi apparatus membrane. It carries out the reaction a 3-O-[beta-D-galactosyl-(1-&gt;3)-N-acetyl-alpha-D-galactosaminyl]-L-seryl-[protein] + UDP-N-acetyl-alpha-D-glucosamine = 3-O-{beta-D-galactosyl-(1-&gt;3)-[N-acetyl-beta-D-glucosaminyl-(1-&gt;6)]-N-acetyl-alpha-D-galactosaminyl}-L-seryl-[protein] + UDP + H(+). The catalysed reaction is a 3-O-[beta-D-galactosyl-(1-&gt;3)-N-acetyl-alpha-D-galactosaminyl]-L-threonyl-[protein] + UDP-N-acetyl-alpha-D-glucosamine = a 3-O-{beta-D-galactosyl-(1-&gt;3)-[N-acetyl-beta-D-glucosaminyl-(1-&gt;6)]-N-acetyl-alpha-D-galactosaminyl}-L-threonyl-[protein] + UDP + H(+). The enzyme catalyses a globoside GalGb4Cer + UDP-N-acetyl-alpha-D-glucosamine = a globoside GlcNAc-(beta1-&gt;6)-GalGb4Cer + UDP + H(+). It catalyses the reaction a ganglioside GA1 + UDP-N-acetyl-alpha-D-glucosamine = a ganglioside beta-D-GlcNAc-(1-&gt;6)-GA1 + UDP + H(+). The protein operates within protein modification; protein glycosylation. Its pathway is glycolipid biosynthesis. Its activity is regulated as follows. Inactivated by thiol-reactive agents. Inhibited by free UDP. Functionally, glycosyltransferase that catalyzes the transfer of an N-acetylglucosamine (GlcNAc) moiety in beta1-6 linkage from UDP-GlcNAc onto mucin-type core 1 O-glycan to form the branched mucin-type core 2 O-glycan. The catalysis is metal ion-independent and occurs with inversion of the anomeric configuration of sugar donor. Selectively involved in synthesis of mucin-type core 2 O-glycans that serve as scaffolds for the display of selectin ligand sialyl Lewis X epitope by myeloid cells, with an impact on homeostasis and recruitment to inflammatory sites. Can also act on glycolipid substrates. Transfers GlcNAc moiety to GalGb4Cer globosides in a reaction step to the synthesis of stage-specific embryonic antigen 1 (SSEA-1) determinant. Can use Galbeta1-3GalNAcalpha1-R and Galbeta1-3GalNAcbeta1-R oligosaccharide derivatives as acceptor substrates. The sequence is that of Beta-1,3-galactosyl-O-glycosyl-glycoprotein beta-1,6-N-acetylglucosaminyltransferase (Gcnt1) from Mus musculus (Mouse).